We begin with the raw amino-acid sequence, 229 residues long: MLEDLELKDTPIVILNFKTYLESTGERALELASICGDVADETGVNMAVAPQHMDLHRVSDAVEIPVLAQHIDAVDAGGHTGSILAECARDAGAAGTLINHSEKRMQLADIEWVISRMKELEMMSVVCTNNVMTTAAAAALGPDFVAVEPPELIGSGIPVSRAEPEVITGSVDAVKKVNPEVSVLCGAGISTGDDMKAAVDLGAEGVLLASGIILADSPRDALLDLVSKV.

16–18 (NFK) contributes to the substrate binding site. Residue His-100 is the Electrophile of the active site. Catalysis depends on Glu-148, which acts as the Proton acceptor. Residues Ile-153, Gly-188, and 209–210 (AS) contribute to the substrate site.

The protein belongs to the triosephosphate isomerase family. In terms of assembly, homotetramer; dimer of dimers.

The protein resides in the cytoplasm. The enzyme catalyses D-glyceraldehyde 3-phosphate = dihydroxyacetone phosphate. The protein operates within carbohydrate biosynthesis; gluconeogenesis. It participates in carbohydrate degradation; glycolysis; D-glyceraldehyde 3-phosphate from glycerone phosphate: step 1/1. Involved in the gluconeogenesis. Catalyzes stereospecifically the conversion of dihydroxyacetone phosphate (DHAP) to D-glyceraldehyde-3-phosphate (G3P). In Methanothermobacter thermautotrophicus (strain ATCC 29096 / DSM 1053 / JCM 10044 / NBRC 100330 / Delta H) (Methanobacterium thermoautotrophicum), this protein is Triosephosphate isomerase.